Consider the following 177-residue polypeptide: MGDASLSVLASSQVVAEGGNNFLVPNGTFFFVLAIFLIVLAVIGTFVVPPVMKVLRERDAMVAKTAADNRKAAEQFEAAQADYEEAMTEARVQASSLRDNARAEGRKVVEDARAKAEQEVLSTLQLAARQLKRERDAVELDLRANVASMSATLASRILGVDVAPAAATTSATKTSGR.

A helical transmembrane segment spans residues 29-49 (FFFVLAIFLIVLAVIGTFVVP).

The protein belongs to the ATPase B chain family. As to quaternary structure, F-type ATPases have 2 components, F(1) - the catalytic core - and F(0) - the membrane proton channel. F(1) has five subunits: alpha(3), beta(3), gamma(1), delta(1), epsilon(1). F(0) has three main subunits: a(1), b(2) and c(10-14). The alpha and beta chains form an alternating ring which encloses part of the gamma chain. F(1) is attached to F(0) by a central stalk formed by the gamma and epsilon chains, while a peripheral stalk is formed by the delta and b chains.

It is found in the cell membrane. Functionally, f(1)F(0) ATP synthase produces ATP from ADP in the presence of a proton or sodium gradient. F-type ATPases consist of two structural domains, F(1) containing the extramembraneous catalytic core and F(0) containing the membrane proton channel, linked together by a central stalk and a peripheral stalk. During catalysis, ATP synthesis in the catalytic domain of F(1) is coupled via a rotary mechanism of the central stalk subunits to proton translocation. In terms of biological role, component of the F(0) channel, it forms part of the peripheral stalk, linking F(1) to F(0). This is ATP synthase subunit b from Mycolicibacterium paratuberculosis (strain ATCC BAA-968 / K-10) (Mycobacterium paratuberculosis).